The following is an 874-amino-acid chain: Alanine--tRNA ligase (874 aa).

Zn(2+)-binding residues include H563, H567, C665, and H669.

This sequence belongs to the class-II aminoacyl-tRNA synthetase family. It depends on Zn(2+) as a cofactor.

Its subcellular location is the cytoplasm. It catalyses the reaction tRNA(Ala) + L-alanine + ATP = L-alanyl-tRNA(Ala) + AMP + diphosphate. Catalyzes the attachment of alanine to tRNA(Ala) in a two-step reaction: alanine is first activated by ATP to form Ala-AMP and then transferred to the acceptor end of tRNA(Ala). Also edits incorrectly charged Ser-tRNA(Ala) and Gly-tRNA(Ala) via its editing domain. This is Alanine--tRNA ligase from Actinobacillus succinogenes (strain ATCC 55618 / DSM 22257 / CCUG 43843 / 130Z).